A 214-amino-acid polypeptide reads, in one-letter code: UPF0502 protein Pput_3252 (214 aa).

It belongs to the UPF0502 family.

The chain is UPF0502 protein Pput_3252 from Pseudomonas putida (strain ATCC 700007 / DSM 6899 / JCM 31910 / BCRC 17059 / LMG 24140 / F1).